Here is a 456-residue protein sequence, read N- to C-terminus: Phosphomethylpyrimidine synthase (456 aa).

Residues Asn80, Met109, Tyr139, His175, 195–197 (SRG), 236–239 (DSLR), and Glu275 contribute to the substrate site. Position 279 (His279) interacts with Zn(2+). Tyr302 contributes to the substrate binding site. Residue His343 participates in Zn(2+) binding. [4Fe-4S] cluster is bound by residues Cys423, Cys426, and Cys431.

The protein belongs to the ThiC family. [4Fe-4S] cluster is required as a cofactor.

It catalyses the reaction 5-amino-1-(5-phospho-beta-D-ribosyl)imidazole + S-adenosyl-L-methionine = 4-amino-2-methyl-5-(phosphooxymethyl)pyrimidine + CO + 5'-deoxyadenosine + formate + L-methionine + 3 H(+). Its pathway is cofactor biosynthesis; thiamine diphosphate biosynthesis. In terms of biological role, catalyzes the synthesis of the hydroxymethylpyrimidine phosphate (HMP-P) moiety of thiamine from aminoimidazole ribotide (AIR) in a radical S-adenosyl-L-methionine (SAM)-dependent reaction. In Prochlorococcus marinus (strain MIT 9301), this protein is Phosphomethylpyrimidine synthase.